We begin with the raw amino-acid sequence, 41 residues long: Pi-stichotoxin-Hcr5b (41 aa).

3 disulfide bridges follow: Cys4-Cys37, Cys6-Cys30, and Cys20-Cys38.

It belongs to the sea anemone type 3 (BDS) potassium channel toxin family.

The protein resides in the secreted. It localises to the nematocyst. In terms of biological role, remarkably non-selective toxin, with activity on many different ion channels. Weakly and reversibly inhibits rat and human homomeric ASIC1 (isoform ASIC1a) (IC(50)=4.8 uM, and IC(50)=14.6 uM), and ASIC3 (IC(50)=15.9 uM). Molecular modeling interaction with ASIC1a suggests that this peptide hinders the collapse of acidic pockets and stabilizes nonconducting channels state. It activates several potassium channels including Kv1.1/KCNA1, Kv1.2/KCNA2, and drosophila Shaker IR. It moderately to potently inhibits potassium channels including Kv1.3/KCNA3, Kv1.4/KCNA4, Kv1.5/KCNA5, Kv1.6/KCNA6, Kv2.1/KCNB1, Kv4.2/KCND2, Kv7.1/KCNQ1, Kv7.2/Kv7.3 (KCNQ2/KCNQ3), Kv7.4/KCNQ4, hERG/KCNH2, and C.elegans QKT1. On sodium channels, it moderately to potently inhibits Nav1.1/SCN1A, Nav1.2/SCN2A, Nav1.3/SCN3A, Nav1.4/SCN4A, Nav1.5/SCN5A, Nav1.6/SCN8A, Nav1.7/SCN9A, Nav1.8/SCN10A, and B.germanica BgNav. It also moderately to potently inhibits Cav3.1/CACNA1G, Cav3.2/CACNA1H, and Cav3.3/CACNA1I. Significant shifts in the voltage-current relationship are observed on Kv and Nav, depending on the channel isoform, whereas the toxin does not seem to modulate the voltage-sensor domains of Cav channels, acting mainly as a pore blocker. Does not activate nicotinic acetylcholine receptors (nAChR), but potentiates ACh-elicited current of human alpha-7/CHRNA7 nAChR. Is also able to bind T.californica muscle-type nAChRs. In vivo, causes an excitatory effect in mice behavior. Also shows antihyperalgesic and analgesic activity in the acid-induced muscle pain mice model, and weak anti-inflammatory effect in models of acute local inflammation. In Radianthus crispa (Leathery sea anemone), this protein is Pi-stichotoxin-Hcr5b.